A 370-amino-acid polypeptide reads, in one-letter code: Lipoyl synthase, mitochondrial (370 aa).

Residues Cys-100, Cys-105, Cys-111, Cys-131, Cys-135, Cys-138, and Ser-346 each contribute to the [4Fe-4S] cluster site. A Radical SAM core domain is found at 116–335 (DKSRATATIM…KEVAEKLGFL (220 aa)).

It belongs to the radical SAM superfamily. Lipoyl synthase family. [4Fe-4S] cluster serves as cofactor.

It localises to the mitochondrion. It catalyses the reaction [[Fe-S] cluster scaffold protein carrying a second [4Fe-4S](2+) cluster] + N(6)-octanoyl-L-lysyl-[protein] + 2 oxidized [2Fe-2S]-[ferredoxin] + 2 S-adenosyl-L-methionine + 4 H(+) = [[Fe-S] cluster scaffold protein] + N(6)-[(R)-dihydrolipoyl]-L-lysyl-[protein] + 4 Fe(3+) + 2 hydrogen sulfide + 2 5'-deoxyadenosine + 2 L-methionine + 2 reduced [2Fe-2S]-[ferredoxin]. Its pathway is protein modification; protein lipoylation via endogenous pathway; protein N(6)-(lipoyl)lysine from octanoyl-[acyl-carrier-protein]: step 2/2. Its function is as follows. Catalyzes the radical-mediated insertion of two sulfur atoms into the C-6 and C-8 positions of the octanoyl moiety bound to the lipoyl domains of lipoate-dependent enzymes, thereby converting the octanoylated domains into lipoylated derivatives. The chain is Lipoyl synthase, mitochondrial (lip5) from Schizosaccharomyces pombe (strain 972 / ATCC 24843) (Fission yeast).